The chain runs to 397 residues: MKRFKRAGAIIETLKEHGHEAYFVGGSVRDFIIDRPIGDIDIATSALPEEVMKLFPKHVPVGLEHGTVIVLQDGEPYEVTTFRTESDYEDFRRPSSVQFVRSLEEDLKRRDFTMNAIAMNEDGEIIDLFGGQEAIQKREIVTVGNAAERFQEDALRMMRGIRFVSTLGFSLEEKTECAIKRYGHLLEHIAIERITVEFEKLLTGPYCVKGLQKLVETKLFMHLPYLQMSEEKILKAAEYNWESFETEIEAWAFFLSCIGEEHPSVFLRQWKFSNKKIKEIVAVLLAIRTRKTKEWDAVFLYQTGVQIALMAERVYQVMIEEYNMSTVSEVQRLFDSLPIQKRQEMNVSGNDLLSWTDKTPGPWVAEVLQKIEEEILQKRLENEKEAIRGWIEECNLL.

G26 and R29 together coordinate ATP. 2 residues coordinate CTP: G26 and R29. 2 residues coordinate Mg(2+): D39 and D41. ATP contacts are provided by R110, D153, R156, R159, and R162. The CTP site is built by R110, D153, R156, R159, and R162.

It belongs to the tRNA nucleotidyltransferase/poly(A) polymerase family. Bacterial CCA-adding enzyme type 3 subfamily. As to quaternary structure, homodimer. Mg(2+) is required as a cofactor.

The enzyme catalyses a tRNA precursor + 2 CTP + ATP = a tRNA with a 3' CCA end + 3 diphosphate. It catalyses the reaction a tRNA with a 3' CCA end + 2 CTP + ATP = a tRNA with a 3' CCACCA end + 3 diphosphate. Its function is as follows. Catalyzes the addition and repair of the essential 3'-terminal CCA sequence in tRNAs without using a nucleic acid template. Adds these three nucleotides in the order of C, C, and A to the tRNA nucleotide-73, using CTP and ATP as substrates and producing inorganic pyrophosphate. tRNA 3'-terminal CCA addition is required both for tRNA processing and repair. Also involved in tRNA surveillance by mediating tandem CCA addition to generate a CCACCA at the 3' terminus of unstable tRNAs. While stable tRNAs receive only 3'-terminal CCA, unstable tRNAs are marked with CCACCA and rapidly degraded. The polypeptide is CCA-adding enzyme (Bacillus cytotoxicus (strain DSM 22905 / CIP 110041 / 391-98 / NVH 391-98)).